Here is a 119-residue protein sequence, read N- to C-terminus: Large ribosomal subunit protein bL20 (119 aa).

The protein belongs to the bacterial ribosomal protein bL20 family.

In terms of biological role, binds directly to 23S ribosomal RNA and is necessary for the in vitro assembly process of the 50S ribosomal subunit. It is not involved in the protein synthesizing functions of that subunit. The polypeptide is Large ribosomal subunit protein bL20 (Gluconacetobacter diazotrophicus (strain ATCC 49037 / DSM 5601 / CCUG 37298 / CIP 103539 / LMG 7603 / PAl5)).